A 40-amino-acid chain; its full sequence is Natriuretic peptide TNPd (40 aa).

Cys9 and Cys25 form a disulfide bridge.

The protein belongs to the natriuretic peptide family. Expressed by the venom gland.

The protein resides in the secreted. Its function is as follows. Snake venom natriuretic peptide that exhibits vasoactive and hypotensive activity. Stimulates cGMP production through the natriuretic peptide receptor 1 (NPR1) with very high potencies for the rat NPR1 (EC(50)=18 nM), and very weak potencies over human NPR1 (30% activation at 10 uM). The sequence is that of Natriuretic peptide TNPd from Oxyuranus microlepidotus (Inland taipan).